We begin with the raw amino-acid sequence, 499 residues long: Lysine--tRNA ligase (499 aa).

Residues glutamate 408 and glutamate 415 each contribute to the Mg(2+) site.

Belongs to the class-II aminoacyl-tRNA synthetase family. In terms of assembly, homodimer. Mg(2+) serves as cofactor.

The protein localises to the cytoplasm. The catalysed reaction is tRNA(Lys) + L-lysine + ATP = L-lysyl-tRNA(Lys) + AMP + diphosphate. The sequence is that of Lysine--tRNA ligase from Bacillus mycoides (strain KBAB4) (Bacillus weihenstephanensis).